The chain runs to 132 residues: Thioredoxin H4-2 (132 aa).

Residues aspartate 18–aspartate 130 enclose the Thioredoxin domain. Residues cysteine 56 and cysteine 59 each act as nucleophile in the active site. Residues cysteine 56 and cysteine 59 are joined by a disulfide bond.

Belongs to the thioredoxin family. Plant H-type subfamily.

It is found in the cytoplasm. In terms of biological role, probable thiol-disulfide oxidoreductase that may be involved in the redox regulation of a number of cytosolic enzymes. The protein is Thioredoxin H4-2 of Oryza sativa subsp. japonica (Rice).